A 235-amino-acid polypeptide reads, in one-letter code: Chalcone--flavanone isomerase 2 (235 aa).

Substrate contacts are provided by Thr-50 and Ser-192.

This sequence belongs to the chalcone isomerase family.

The enzyme catalyses a chalcone = a flavanone.. It participates in secondary metabolite biosynthesis; flavonoid biosynthesis. Catalyzes the intramolecular cyclization of bicyclic chalcones into tricyclic (S)-flavanones. Responsible for the isomerization of 4,2',4',6'-tetrahydroxychalcone (also termed chalcone) into naringenin. The polypeptide is Chalcone--flavanone isomerase 2 (CHI2) (Chrysanthemum morifolium (Florist's daisy)).